A 204-amino-acid chain; its full sequence is Putative 3-methyladenine DNA glycosylase (204 aa).

It belongs to the DNA glycosylase MPG family.

The sequence is that of Putative 3-methyladenine DNA glycosylase from Mycobacterium sp. (strain KMS).